Here is a 166-residue protein sequence, read N- to C-terminus: DHIIPLQIKNSQDSQIISFFKADKGSVSRQVHPPWPVPCKSKLQEQDSSESKESKAEQVKINNCVVQNAMLYIENNYFNDINIDTVAFSVGVSRSYLVKQFKLATNKTINNRIIEVRIEQAKKVLLKKSVTETAYEVGFNNSNYFATVFKKRTNYTPKQFKRTFSS.

The interval 28-55 (SRQVHPPWPVPCKSKLQEQDSSESKESK) is disordered. A compositionally biased stretch (basic and acidic residues) spans 42–55 (KLQEQDSSESKESK). Residues 67–163 (QNAMLYIENN…NYTPKQFKRT (97 aa)) form the HTH araC/xylS-type domain. DNA-binding regions (H-T-H motif) lie at residues 84-105 (DTVA…KLAT) and 130-153 (VTET…KKRT).

This is an uncharacterized protein from Pseudoalteromonas carrageenovora (Alteromonas carrageenovora).